Here is a 271-residue protein sequence, read N- to C-terminus: Putative pyruvate, phosphate dikinase regulatory protein (271 aa).

153-160 lines the ADP pocket; sequence GVSRTSKT.

Belongs to the pyruvate, phosphate/water dikinase regulatory protein family. PDRP subfamily.

The catalysed reaction is N(tele)-phospho-L-histidyl/L-threonyl-[pyruvate, phosphate dikinase] + ADP = N(tele)-phospho-L-histidyl/O-phospho-L-threonyl-[pyruvate, phosphate dikinase] + AMP + H(+). It catalyses the reaction N(tele)-phospho-L-histidyl/O-phospho-L-threonyl-[pyruvate, phosphate dikinase] + phosphate + H(+) = N(tele)-phospho-L-histidyl/L-threonyl-[pyruvate, phosphate dikinase] + diphosphate. Functionally, bifunctional serine/threonine kinase and phosphorylase involved in the regulation of the pyruvate, phosphate dikinase (PPDK) by catalyzing its phosphorylation/dephosphorylation. The chain is Putative pyruvate, phosphate dikinase regulatory protein from Shouchella clausii (strain KSM-K16) (Alkalihalobacillus clausii).